Here is a 150-residue protein sequence, read N- to C-terminus: SsrA-binding protein (150 aa).

The segment at 127 to 150 is disordered; it reads KRETEKQRDWQREKARIMKGDAKD.

It belongs to the SmpB family.

Its subcellular location is the cytoplasm. In terms of biological role, required for rescue of stalled ribosomes mediated by trans-translation. Binds to transfer-messenger RNA (tmRNA), required for stable association of tmRNA with ribosomes. tmRNA and SmpB together mimic tRNA shape, replacing the anticodon stem-loop with SmpB. tmRNA is encoded by the ssrA gene; the 2 termini fold to resemble tRNA(Ala) and it encodes a 'tag peptide', a short internal open reading frame. During trans-translation Ala-aminoacylated tmRNA acts like a tRNA, entering the A-site of stalled ribosomes, displacing the stalled mRNA. The ribosome then switches to translate the ORF on the tmRNA; the nascent peptide is terminated with the 'tag peptide' encoded by the tmRNA and targeted for degradation. The ribosome is freed to recommence translation, which seems to be the essential function of trans-translation. This is SsrA-binding protein from Cupriavidus necator (strain ATCC 17699 / DSM 428 / KCTC 22496 / NCIMB 10442 / H16 / Stanier 337) (Ralstonia eutropha).